Reading from the N-terminus, the 109-residue chain is Probable guanidinium efflux system subunit GdnC (109 aa).

Transmembrane regions (helical) follow at residues 3 to 23, 26 to 46, 55 to 75, and 81 to 101; these read WGSV…LKHA, ALEW…LVKA, VYAV…IALF, and IAKL…KLVT.

The protein belongs to the drug/metabolite transporter (DMT) superfamily. Small multidrug resistance (SMR) (TC 2.A.7.1) family. YkkC/YkkD subfamily. In terms of assembly, the efflux pump is composed of GdnC and GdnD.

Its subcellular location is the cell membrane. Probably involved in guanidinium transport. In Bacillus licheniformis (strain ATCC 14580 / DSM 13 / JCM 2505 / CCUG 7422 / NBRC 12200 / NCIMB 9375 / NCTC 10341 / NRRL NRS-1264 / Gibson 46), this protein is Probable guanidinium efflux system subunit GdnC.